The primary structure comprises 331 residues: Ribosomal RNA small subunit methyltransferase H (331 aa).

Residues 49-51 (GGH), Asp68, Leu102, Asp116, and Gln123 contribute to the S-adenosyl-L-methionine site.

It belongs to the methyltransferase superfamily. RsmH family.

Its subcellular location is the cytoplasm. The catalysed reaction is cytidine(1402) in 16S rRNA + S-adenosyl-L-methionine = N(4)-methylcytidine(1402) in 16S rRNA + S-adenosyl-L-homocysteine + H(+). Specifically methylates the N4 position of cytidine in position 1402 (C1402) of 16S rRNA. This Renibacterium salmoninarum (strain ATCC 33209 / DSM 20767 / JCM 11484 / NBRC 15589 / NCIMB 2235) protein is Ribosomal RNA small subunit methyltransferase H.